A 150-amino-acid chain; its full sequence is Putative transmembrane protein DDB_G0277665 (150 aa).

The next 2 helical transmembrane spans lie at 4-24 (TLIIIIVSVIVGYLISHFNIL) and 42-62 (VIVGAIVGQALIYFFVFFLPL).

The protein localises to the membrane. The protein is Putative transmembrane protein DDB_G0277665 of Dictyostelium discoideum (Social amoeba).